We begin with the raw amino-acid sequence, 220 residues long: Transmembrane emp24 domain-containing protein 1 (220 aa).

A signal peptide spans 1–19; that stretch reads MAWSSSFLFIVLPLAAAVA. Residues 20 to 187 lie on the Extracellular side of the membrane; it reads VQPQDTELTF…LQDSNLERVN (168 aa). Residues 36–118 form the GOLD domain; that stretch reads QECFYQTTLY…EKLVFFELIF (83 aa). Residues 138-164 adopt a coiled-coil conformation; it reads ELLDIKLEDIKESIESVKSRLERSIQM. Residues 188–208 traverse the membrane as a helical segment; sequence FWSAINVGVLVTVAFLQVYML. Over 209–220 the chain is Cytoplasmic; that stretch reads KSLFDDKRKIRT. The COPII vesicle coat-binding signature appears at 211–212; that stretch reads LF. Residues 211-220 carry the COPI vesicle coat-binding motif; the sequence is LFDDKRKIRT.

This sequence belongs to the EMP24/GP25L family. As to quaternary structure, homodimer in endoplasmic reticulum, endoplasmic reticulum-Golgi intermediate compartment and cis-Golgi network. Interacts with IL1RL1. Interacts with RNF26; this interaction is important to modulate innate immune signaling through the cGAS-STING pathway.

It is found in the cell membrane. The protein localises to the endoplasmic reticulum membrane. Its subcellular location is the golgi apparatus. It localises to the cis-Golgi network membrane. The protein resides in the endoplasmic reticulum-Golgi intermediate compartment membrane. Potential role in vesicular protein trafficking, mainly in the early secretory pathway. May act as a cargo receptor at the lumenal side for incorporation of secretory cargo molecules into transport vesicles and may be involved in vesicle coat formation at the cytoplasmic side. Plays a positive role in IL-33-mediated IL-8 and IL-6 production by interacting with interleukin-33 receptor IL1RL1. Plays also a role in the modulation of innate immune signaling through the cGAS-STING pathway by interacting with RNF26. This is Transmembrane emp24 domain-containing protein 1 (tmed1) from Xenopus tropicalis (Western clawed frog).